Consider the following 114-residue polypeptide: Protein S40-2 (114 aa).

Positions 23-50 (RYTKLYNSRNDEKKGTRRHETAEKTSPV) are disordered. Residues 31-45 (RNDEKKGTRRHETAE) show a composition bias toward basic and acidic residues.

Belongs to the senescence regulator S40 family.

Its subcellular location is the cytoplasm. The protein is Protein S40-2 of Arabidopsis thaliana (Mouse-ear cress).